Consider the following 147-residue polypeptide: Ubiquitin-conjugating enzyme E2 D2 (147 aa).

Positions 1–147 constitute a UBC core domain; that stretch reads MALKRIHKEL…SREWTQKYAM (147 aa). The active-site Glycyl thioester intermediate is C85.

It belongs to the ubiquitin-conjugating enzyme family. In terms of assembly, interacts with SCF (SKP1-CUL1-F-box protein) E3 ubiquitin ligase complex. Interacts with CNOT4 (via RING domain). Interacts with E3 ubiquitin-protein ligases CBLC, PJA1 and PJA2. Interacts with PDZRN3. Interacts with PPP1R11. Interacts with E3 ubiquitin-protein ligase PHF7; the interaction inhibits cleavage of PHF7 and promotes association of the complex with the nucleosome core particle.

The enzyme catalyses S-ubiquitinyl-[E1 ubiquitin-activating enzyme]-L-cysteine + [E2 ubiquitin-conjugating enzyme]-L-cysteine = [E1 ubiquitin-activating enzyme]-L-cysteine + S-ubiquitinyl-[E2 ubiquitin-conjugating enzyme]-L-cysteine.. It carries out the reaction S-ubiquitinyl-[E1 ubiquitin-activating enzyme]-L-cysteine + [acceptor protein]-L-lysine = [E1 ubiquitin-activating enzyme]-L-cysteine + N(6)-monoubiquitinyl-[acceptor protein]-L-lysine.. Its pathway is protein modification; protein ubiquitination. Functionally, accepts ubiquitin from the E1 complex and catalyzes its covalent attachment to other proteins. In vitro catalyzes 'Lys-48'-linked polyubiquitination. Mediates the selective degradation of short-lived and abnormal proteins. Functions in the E6/E6-AP-induced ubiquitination of p53/TP53. Mediates ubiquitination of PEX5 and SQSTM1 and autoubiquitination of STUB1 and TRAF6. Involved in the signal-induced conjugation and subsequent degradation of NFKBIA, FBXW2-mediated GCM1 ubiquitination and degradation, MDM2-dependent degradation of p53/TP53 and the activation of MAVS in the mitochondria by RIGI in response to viral infection. Essential for viral activation of IRF3. The chain is Ubiquitin-conjugating enzyme E2 D2 (UBE2D2) from Sus scrofa (Pig).